The sequence spans 369 residues: Caffeine synthase 1 (369 aa).

Y24 lines the S-adenosyl-L-homocysteine pocket. T31 serves as a coordination point for caffeine. 6 residues coordinate S-adenosyl-L-homocysteine: C66, N71, D103, L104, S138, and F139. Residues Y156, H159, and W160 each coordinate caffeine. A Mg(2+)-binding site is contributed by N177. R225 serves as a coordination point for caffeine. Positions 263, 265, and 266 each coordinate Mg(2+). F321 contacts caffeine.

The protein belongs to the methyltransferase superfamily. Type-7 methyltransferase family. Requires Mg(2+) as cofactor.

The enzyme catalyses theobromine + S-adenosyl-L-methionine = caffeine + S-adenosyl-L-homocysteine + H(+). It catalyses the reaction 7-methylxanthine + S-adenosyl-L-methionine = theobromine + S-adenosyl-L-homocysteine + H(+). The protein operates within alkaloid biosynthesis. Functionally, involved in the biosynthesis of caffeine. Catalyzes the conversion of 7-methylxanthine (7mX) to theobromine and of theobromine to caffeine. This chain is Caffeine synthase 1, found in Camellia taliensis (Wild tea).